The following is a 78-amino-acid chain: Acyl carrier protein (78 aa).

The region spanning 2–77 is the Carrier domain; the sequence is SNIEERVKKI…AAIDYVTSNA (76 aa). An O-(pantetheine 4'-phosphoryl)serine modification is found at Ser-37.

Belongs to the acyl carrier protein (ACP) family. Post-translationally, 4'-phosphopantetheine is transferred from CoA to a specific serine of apo-ACP by AcpS. This modification is essential for activity because fatty acids are bound in thioester linkage to the sulfhydryl of the prosthetic group.

It is found in the cytoplasm. It functions in the pathway lipid metabolism; fatty acid biosynthesis. Its function is as follows. Carrier of the growing fatty acid chain in fatty acid biosynthesis. This is Acyl carrier protein from Vibrio cholerae serotype O1 (strain ATCC 39315 / El Tor Inaba N16961).